Reading from the N-terminus, the 483-residue chain is MEFRFNMHPLFRARIVRINNSLLPTGFVAQSRRVALDATAQISEIINTIGSMSAQAQGLSVPVTTAQKLRNSDHHIYLMFESNDRNGLVVGILKVGRKSLYVFDPSGETVNVTAPCVLDFYVHESRQRGGLGRELFEHMLREENIQPDELAIDRPSEKLLGFLQKHYGLSKKIPQMNNFVVYEGFFASKAQNSTDIDGRRMHITASPNTNLFGPTFTTTEERRRSTSQTRTNVAPMPIIAQPPVGRYAAKRPTCSMAQVNHYSSMVGKISFPEENTGNGKRSVFEEQELDQRLADEMERCVELGAGGDEPDASRYTPHHGLEVKFADQPETLPYDDMPEPGPDPDPYDFHPHHLELHDDTEGGGSHRDQSLSPQSVSQQASPVHPAGSDYGVLGSRKPARYTKQNTGLKNISFGVGAAVMPSGKMEFDQEENEGFGSVKINRPIGKSGTRGSLHDDNESVHSNGSQQGGGGHFDLKFYHNKLW.

Residues 1 to 186 enclose the N-acetyltransferase domain; sequence MEFRFNMHPL…NNFVVYEGFF (186 aa). Residues 120–133 and 156–165 each bind acetyl-CoA; these read FYVHESRQRGGLGR and SEKLLGFLQK. Disordered regions lie at residues 204–231, 330–395, and 437–472; these read TASPNTNLFGPTFTTTEERRRSTSQTRT, ETLP…VLGS, and SVKINRPIGKSGTRGSLHDDNESVHSNGSQQGGGGH. A compositionally biased stretch (basic and acidic residues) spans 347–369; it reads YDFHPHHLELHDDTEGGGSHRDQ. Residues 370–383 are compositionally biased toward low complexity; sequence SLSPQSVSQQASPV.

Belongs to the acetyltransferase ATAT1 family.

It catalyses the reaction L-lysyl-[alpha-tubulin] + acetyl-CoA = N(6)-acetyl-L-lysyl-[alpha-tubulin] + CoA + H(+). In terms of biological role, specifically acetylates 'Lys-40' in alpha-tubulin on the lumenal side of microtubules. Promotes microtubule destabilization and accelerates microtubule dynamics; this activity may be independent of acetylation activity. Acetylates alpha-tubulin with a slow enzymatic rate, due to a catalytic site that is not optimized for acetyl transfer. Enters the microtubule through each end and diffuses quickly throughout the lumen of microtubules. Acetylates only long/old microtubules because of its slow acetylation rate since it does not have time to act on dynamically unstable microtubules before the enzyme is released. This is Alpha-tubulin N-acetyltransferase from Anopheles gambiae (African malaria mosquito).